The primary structure comprises 261 residues: Guanine nucleotide exchange factor BopE (261 aa).

Over residues 241 to 253 (RRAAQDASRDEKG) the composition is skewed to basic and acidic residues. Residues 241-261 (RRAAQDASRDEKGAANAADGA) are disordered.

Belongs to the GEF (guanine exchange factor) SopE family. As to quaternary structure, monomer. Interacts with human CDC42.

The protein resides in the secreted. Functionally, activator for both CDC42 and RAC1 by directly interacting with these Rho GTPases and acting as a guanine nucleotide exchange factor (GEF). This activation results in actin cytoskeleton rearrangements and stimulates membrane ruffling, thus promoting bacterial entry into non-phagocytic cells. This is Guanine nucleotide exchange factor BopE (bopE) from Burkholderia thailandensis (strain ATCC 700388 / DSM 13276 / CCUG 48851 / CIP 106301 / E264).